The chain runs to 437 residues: Trigger factor (437 aa).

The 86-residue stretch at 163-248 folds into the PPIase FKBP-type domain; that stretch reads DDRVTVDFEG…VKKIEASHLP (86 aa).

This sequence belongs to the FKBP-type PPIase family. Tig subfamily.

Its subcellular location is the cytoplasm. It catalyses the reaction [protein]-peptidylproline (omega=180) = [protein]-peptidylproline (omega=0). In terms of biological role, involved in protein export. Acts as a chaperone by maintaining the newly synthesized protein in an open conformation. Functions as a peptidyl-prolyl cis-trans isomerase. This is Trigger factor from Variovorax paradoxus (strain S110).